The chain runs to 396 residues: NADH-quinone oxidoreductase subunit D (396 aa).

Belongs to the complex I 49 kDa subunit family. In terms of assembly, NDH-1 is composed of 14 different subunits. Subunits NuoB, C, D, E, F, and G constitute the peripheral sector of the complex.

The protein localises to the cell inner membrane. It catalyses the reaction a quinone + NADH + 5 H(+)(in) = a quinol + NAD(+) + 4 H(+)(out). Functionally, NDH-1 shuttles electrons from NADH, via FMN and iron-sulfur (Fe-S) centers, to quinones in the respiratory chain. The immediate electron acceptor for the enzyme in this species is believed to be ubiquinone. Couples the redox reaction to proton translocation (for every two electrons transferred, four hydrogen ions are translocated across the cytoplasmic membrane), and thus conserves the redox energy in a proton gradient. The sequence is that of NADH-quinone oxidoreductase subunit D from Brucella suis biovar 1 (strain 1330).